The following is a 368-amino-acid chain: 3-dehydroquinate synthase (368 aa).

Residues 112 to 116, 136 to 137, Lys-149, Lys-158, and 176 to 179 contribute to the NAD(+) site; these read GVVGD, TT, and FLDT. Residues Glu-191, His-257, and His-274 each contribute to the Zn(2+) site.

It belongs to the sugar phosphate cyclases superfamily. Dehydroquinate synthase family. Requires Co(2+) as cofactor. The cofactor is Zn(2+). NAD(+) serves as cofactor.

It is found in the cytoplasm. The catalysed reaction is 7-phospho-2-dehydro-3-deoxy-D-arabino-heptonate = 3-dehydroquinate + phosphate. The protein operates within metabolic intermediate biosynthesis; chorismate biosynthesis; chorismate from D-erythrose 4-phosphate and phosphoenolpyruvate: step 2/7. Functionally, catalyzes the conversion of 3-deoxy-D-arabino-heptulosonate 7-phosphate (DAHP) to dehydroquinate (DHQ). The sequence is that of 3-dehydroquinate synthase from Natranaerobius thermophilus (strain ATCC BAA-1301 / DSM 18059 / JW/NM-WN-LF).